We begin with the raw amino-acid sequence, 134 residues long: Tripartite terminase subunit 2 (134 aa).

This sequence belongs to the herpesviridae TRM2 protein family. In terms of assembly, associates with TRM1 and TRM3 to form the tripartite terminase complex.

The protein localises to the host nucleus. Component of the molecular motor that translocates viral genomic DNA in empty capsid during DNA packaging. Forms a tripartite terminase complex together with TRM1 and TRM3 in the host cytoplasm. Once the complex reaches the host nucleus, it interacts with the capsid portal vertex. This portal forms a ring in which genomic DNA is translocated into the capsid. This is Tripartite terminase subunit 2 from Gallus gallus (Chicken).